Here is a 588-residue protein sequence, read N- to C-terminus: Aspartate--tRNA ligase (588 aa).

Position 177 (glutamate 177) interacts with L-aspartate. Residues 201–204 are aspartate; it reads QIFK. Position 223 (arginine 223) interacts with L-aspartate. ATP-binding positions include 223–225 and glutamine 232; that span reads RDE. L-aspartate is bound at residue histidine 451. ATP is bound at residue glutamate 485. Arginine 492 is a binding site for L-aspartate. Residue 537–540 participates in ATP binding; the sequence is GLDR.

The protein belongs to the class-II aminoacyl-tRNA synthetase family. Type 1 subfamily. In terms of assembly, homodimer.

The protein localises to the cytoplasm. The enzyme catalyses tRNA(Asp) + L-aspartate + ATP = L-aspartyl-tRNA(Asp) + AMP + diphosphate. In terms of biological role, catalyzes the attachment of L-aspartate to tRNA(Asp) in a two-step reaction: L-aspartate is first activated by ATP to form Asp-AMP and then transferred to the acceptor end of tRNA(Asp). The chain is Aspartate--tRNA ligase from Staphylococcus saprophyticus subsp. saprophyticus (strain ATCC 15305 / DSM 20229 / NCIMB 8711 / NCTC 7292 / S-41).